The sequence spans 469 residues: UDP-N-acetylmuramoylalanine--D-glutamate ligase (469 aa).

An ATP-binding site is contributed by Gly-123–Thr-129.

The protein belongs to the MurCDEF family.

The protein localises to the cytoplasm. It catalyses the reaction UDP-N-acetyl-alpha-D-muramoyl-L-alanine + D-glutamate + ATP = UDP-N-acetyl-alpha-D-muramoyl-L-alanyl-D-glutamate + ADP + phosphate + H(+). It functions in the pathway cell wall biogenesis; peptidoglycan biosynthesis. Cell wall formation. Catalyzes the addition of glutamate to the nucleotide precursor UDP-N-acetylmuramoyl-L-alanine (UMA). In Phenylobacterium zucineum (strain HLK1), this protein is UDP-N-acetylmuramoylalanine--D-glutamate ligase.